Consider the following 595-residue polypeptide: Solute carrier family 13 member 1 (595 aa).

Transmembrane regions (helical) follow at residues 13–33, 40–60, 77–97, 113–133, and 134–154; these read FLLVVFTVLVLLPLPLIIRSK, ILFVIATFWITEALPLSITAL, VASAYFKDFHLLLIGVICLAT, VMMVGVNPAWLTLGFMSSTAF, and LSMWLSNTSTAAMVMPIVEAV. N-linked (GlcNAc...) asparagine glycosylation is present at Asn174. Residues 190 to 218 form a disordered region; sequence QETNERKEKTKPALGSSNDKGKVSSKMET. Residues 208–218 are compositionally biased toward basic and acidic residues; sequence DKGKVSSKMET. The next 8 membrane-spanning stretches (helical) occupy residues 239 to 259, 283 to 303, 348 to 368, 381 to 401, 464 to 484, 491 to 511, 512 to 532, and 553 to 573; these read LMCLCIAYSSTIGGLTTITGT, SWFLFSFPVAVILLLLSWIWL, IVTLVIFIVMALLWFSRDPGF, GYVTDSTVALVAGILFFLIPA, PLGSLPVWLIILISSLIVTSL, PATITILFPILSPLAEAIHVN, PLHILLPSTLCTSFAFLLPVA, and AGLGVNILGVAVVMLGMFTWI. Asn591 carries N-linked (GlcNAc...) asparagine glycosylation.

This sequence belongs to the SLC13A/DASS transporter (TC 2.A.47) family. NADC subfamily. As to expression, kidney and intestine.

It is found in the apical cell membrane. The enzyme catalyses sulfate(out) + 3 Na(+)(out) = sulfate(in) + 3 Na(+)(in). It carries out the reaction selenate(out) + 3 Na(+)(out) = selenate(in) + 3 Na(+)(in). The catalysed reaction is thiosulfate(out) + 3 Na(+)(out) = thiosulfate(in) + 3 Na(+)(in). In terms of biological role, sodium:sulfate symporter that mediates sulfate reabsorption in the kidney and small intestine. Can also mediate the transport of selenate and thiosulfate. This Rattus norvegicus (Rat) protein is Solute carrier family 13 member 1 (Slc13a1).